Here is a 422-residue protein sequence, read N- to C-terminus: Serine protease HTRA2, mitochondrial (422 aa).

A mitochondrion-targeting transit peptide spans 1-17 (MALRGSHRLQVILKRCI). The propeptide occupies 18-74 (ASPLFHSHAPNRRSSQPAIKGGEPNSNGNSGHDQQNGERKGKGWRRLVSFFVPFSLG). The segment at 24-56 (SHAPNRRSSQPAIKGGEPNSNGNSGHDQQNGER) is disordered. The segment covering 41 to 51 (PNSNGNSGHDQ) has biased composition (polar residues). A helical membrane pass occupies residues 64–82 (LVSFFVPFSLGAVVSAAVI). Short sequence motifs (IAP-binding) lie at residues 75–78 (AVVS) and 94–97 (SKMT). Residues 139-302 (SNGSGFIIEQ…IPIDYVKVFL (164 aa)) are serine protease. Residues His157, Asp189, and Ser266 each act as charge relay system in the active site. The PDZ domain occupies 325 to 410 (MGITMLTLTP…NLDIVILRGV (86 aa)).

This sequence belongs to the peptidase S1C family. Interacts with th/DIAP1 (via BIR 2 domain).

It is found in the mitochondrion intermembrane space. It localises to the mitochondrion membrane. It catalyses the reaction Cleavage of non-polar aliphatic amino-acids at the P1 position, with a preference for Val, Ile and Met. At the P2 and P3 positions, Arg is selected most strongly with a secondary preference for other hydrophilic residues.. Functionally, serine protease that shows proteolytic activity against a non-specific substrate beta-casein. Promotes or induces cell death either by direct binding to and inhibition of BIRC proteins (also called inhibitor of apoptosis proteins, IAPs), leading to an increase in caspase activity, or by a BIRC inhibition-independent, caspase-independent and serine protease activity-dependent mechanism. Can antagonize antiapoptotic activity of th/Diap1 by directly inducing the degradation of th/Diap1. This chain is Serine protease HTRA2, mitochondrial, found in Drosophila erecta (Fruit fly).